The following is a 561-amino-acid chain: uncharacterized protein (561 aa).

An N-terminal signal peptide occupies residues 1 to 24; the sequence is MELGAWRSILYIAFLFAITRHAFC. Over 25-509 the chain is Lumenal; that stretch reads KAVNLVHSPE…GYVYLSEIKQ (485 aa). The chain crosses the membrane as a helical span at residues 510-530; sequence YSSLILISLWISLILFVSFLN. The Cytoplasmic portion of the chain corresponds to 531–561; the sequence is RRLILHYSFESVHQLKTLTRKFIYSSLLKQD.

The protein resides in the endoplasmic reticulum membrane. It localises to the golgi apparatus membrane. This is an uncharacterized protein from Schizosaccharomyces pombe (strain 972 / ATCC 24843) (Fission yeast).